The sequence spans 388 residues: MLELIYILPLLCFVYFLFRRFVLENFYVESSGKYVMITGCDSGFGRLLATSLLDKHVNVFAACFTQQGMASLHSEWKLKKGPKGQLYTLQLDVTSQASVDSAKSFVTKILKEQNSKLWGLVNNAGIFSIHGPDDWCSVDEYASSLNVNTLGAVRMCHAFVPLIKKSRGRIVTMGSTAGRLHGLYVAPYVTAKFAVEAYMDCLRLEMRPFGVSVHILEPGCFKTELLNNDAQRMRIQKIWNSLSVETKEEYGEDYRNDFERAWEAGVNVVANPNIGWVVDCYSHALFSWWPRLRYCPGWDAIFMFIPLSIFPTALQDWILAGLYKLNPGPSLTPAVLVKNKKRRSAIQWIQFLSQIAIIPLLYTIFFVKNTQKQTVETSTHHHNVTVSE.

The helical transmembrane segment at 2–22 (LELIYILPLLCFVYFLFRRFV) threads the bilayer. The active-site Proton acceptor is Y188. 2 helical membrane-spanning segments follow: residues 300-320 (AIFM…WILA) and 346-366 (IQWI…TIFF).

Belongs to the short-chain dehydrogenases/reductases (SDR) family. In terms of tissue distribution, strongly expressed in the hypodermis and posterior pharyngeal bulb and in a number of unidentified neurons of the head and tail.

Its subcellular location is the membrane. The catalysed reaction is lathosterol + NAD(+) = 5alpha-cholest-7-en-3-one + NADH + H(+). It participates in steroid hormone biosynthesis; dafachronic acid biosynthesis. In terms of biological role, 3beta-hydroxysteroid dehydrogenase that converts 3beta-hydroxysteroids to 3-ketosteroids, an essential step in the production of dafachronic acids from cholesterol. Catalyzes the dehydrogenation of lathosterol (5alpha-cholest-7-en-3beta-ol) to lathosterone (5alpha-cholest-7-en-3-one), a step required for maximal biosynthesis of Delta(7)-dafachronic acid. Dafachronic acids act as ligands and bind directly to the nuclear hormone receptor (NHR) daf-12, suppressing dauer formation and inducing reproductive growth, they can also regulate C.elegans lifespan. The sequence is that of 3beta-hydroxysteroid dehydrogenase dhs-16 (dhs-16) from Caenorhabditis elegans.